The chain runs to 82 residues: Exodeoxyribonuclease 7 small subunit (82 aa).

It belongs to the XseB family. In terms of assembly, heterooligomer composed of large and small subunits.

The protein resides in the cytoplasm. It catalyses the reaction Exonucleolytic cleavage in either 5'- to 3'- or 3'- to 5'-direction to yield nucleoside 5'-phosphates.. Functionally, bidirectionally degrades single-stranded DNA into large acid-insoluble oligonucleotides, which are then degraded further into small acid-soluble oligonucleotides. The chain is Exodeoxyribonuclease 7 small subunit from Sodalis glossinidius (strain morsitans).